Consider the following 845-residue polypeptide: Synaptonemal complex protein 1 (845 aa).

Residues 59 to 215 (ETRQVYVDLN…YQLTEEKEAQ (157 aa)) form an interaction with SYCE3 region. 2 coiled-coil regions span residues 64–211 (YVDL…LTEE) and 244–544 (LRTE…EIEV). The segment at 550-644 (EKLLGEVEKA…VSLKKQLEIE (95 aa)) is required for pH-induced assembly of C-terminal ends into antiparallel tetramers. The Nuclear localization signal motif lies at 553–556 (LGEV). Residues 620 to 663 (KTALETELSNIRNELVSLKKQLEIEREEKEKLKLEKENTAILKD) adopt a coiled-coil conformation. The segment at 657–845 (NTAILKDKKD…RLKEAEKLFA (189 aa)) is DNA-binding. S676 carries the post-translational modification Phosphoserine. The span at 684–703 (FDSKTTPSQNISRISSSMES) shows a compositional bias: polar residues. Residues 684–709 (FDSKTTPSQNISRISSSMESGKTKDN) are disordered. Positions 753 to 756 (KKRK) match the Nuclear localization signal motif. The interval 786-808 (LYNNNSPNSHLTPKQTPLSLSTP) is disordered.

Structural component of synaptonemal complexes. Homotetramer that consists of an N-terminal four-helical bundle that bifurcates into two elongated C-terminal dimeric coiled coils. This tetrameric building block potentially self-assembles into a supramolecular zipper-like lattice to mediate meiotic chromosome synapsis. Self-assembly is likely initiated by local proton density at chromosome axis, which is predicted to trigger antiparallel back to back assembly of adjacent C-terminal ends into tetrameric structures that anchor to chromosomal DNA. Then the N-terminal ends are predicted to undergo cooperative antiparallel head to head assembly at the midline of synaptonemal complexes central element to form a zipper-like lattice between properly aligned homologous chromosomes. The nascent synapsis generated by SYCP1 is stabilized through interaction with central element proteins SYCE1 and SYCE2. Interacts (via tetrameric core) with SYCE3; the interaction remodels SYCP1 homotetramers to 2:1 heterotrimers with SYCE3. SYCP1/SYCE3 heterotrimers form lattice assemblies as part of the mature synaptonemal complex via both lateral and head-to-head interactions. Forms a complex with EWSR1, PRDM9, SYCP3 and REC8; complex formation is dependent of phosphorylated form of REC8 and requires PRDM9 bound to hotspot DNA; EWSR1 joins PRDM9 with the chromosomal axis through REC8. Interacts with SPO16.

Its subcellular location is the nucleus. It localises to the chromosome. The protein resides in the centromere. Major component of the transverse filaments of synaptonemal complexes, formed between homologous chromosomes during meiotic prophase. Required for normal assembly of the central element of the synaptonemal complexes. Required for normal centromere pairing during meiosis. Required for normal meiotic chromosome synapsis during oocyte and spermatocyte development and for normal male and female fertility. The sequence is that of Synaptonemal complex protein 1 from Mesocricetus auratus (Golden hamster).